A 103-amino-acid chain; its full sequence is UPF0145 protein PBPRB0184 (103 aa).

This sequence belongs to the UPF0145 family.

In Photobacterium profundum (strain SS9), this protein is UPF0145 protein PBPRB0184.